A 694-amino-acid polypeptide reads, in one-letter code: DNA-directed RNA polymerase subunit beta' (694 aa).

Zn(2+)-binding residues include Cys69, Cys71, Cys87, and Cys90. Mg(2+) contacts are provided by Asp489, Asp491, and Asp493.

This sequence belongs to the RNA polymerase beta' chain family. RpoC1 subfamily. In plastids the minimal PEP RNA polymerase catalytic core is composed of four subunits: alpha, beta, beta', and beta''. When a (nuclear-encoded) sigma factor is associated with the core the holoenzyme is formed, which can initiate transcription. Mg(2+) serves as cofactor. Requires Zn(2+) as cofactor.

The protein localises to the plastid. Its subcellular location is the chloroplast. It carries out the reaction RNA(n) + a ribonucleoside 5'-triphosphate = RNA(n+1) + diphosphate. Its function is as follows. DNA-dependent RNA polymerase catalyzes the transcription of DNA into RNA using the four ribonucleoside triphosphates as substrates. In Adiantum capillus-veneris (Maidenhair fern), this protein is DNA-directed RNA polymerase subunit beta'.